We begin with the raw amino-acid sequence, 417 residues long: Serine hydroxymethyltransferase (417 aa).

(6S)-5,6,7,8-tetrahydrofolate is bound by residues leucine 121 and 125-127 (GHL). Lysine 229 carries the N6-(pyridoxal phosphate)lysine modification. (6S)-5,6,7,8-tetrahydrofolate is bound at residue 355-357 (SPF).

Belongs to the SHMT family. Homodimer. Pyridoxal 5'-phosphate is required as a cofactor.

The protein resides in the cytoplasm. The catalysed reaction is (6R)-5,10-methylene-5,6,7,8-tetrahydrofolate + glycine + H2O = (6S)-5,6,7,8-tetrahydrofolate + L-serine. It participates in one-carbon metabolism; tetrahydrofolate interconversion. It functions in the pathway amino-acid biosynthesis; glycine biosynthesis; glycine from L-serine: step 1/1. Catalyzes the reversible interconversion of serine and glycine with tetrahydrofolate (THF) serving as the one-carbon carrier. This reaction serves as the major source of one-carbon groups required for the biosynthesis of purines, thymidylate, methionine, and other important biomolecules. Also exhibits THF-independent aldolase activity toward beta-hydroxyamino acids, producing glycine and aldehydes, via a retro-aldol mechanism. This chain is Serine hydroxymethyltransferase, found in Shewanella putrefaciens (strain CN-32 / ATCC BAA-453).